The chain runs to 144 residues: Large ribosomal subunit protein uL15 (144 aa).

The segment at 1-53 (MRLNTLSPAEGAKHAPKRVGRGIGSGLGKTAGRGHKGQNSRSGGGVRRGFEGG) is disordered. Gly residues predominate over residues 21 to 31 (RGIGSGLGKTA).

This sequence belongs to the universal ribosomal protein uL15 family. In terms of assembly, part of the 50S ribosomal subunit.

Its function is as follows. Binds to the 23S rRNA. The chain is Large ribosomal subunit protein uL15 from Serratia proteamaculans (strain 568).